Here is a 224-residue protein sequence, read N- to C-terminus: UPF0173 metal-dependent hydrolase Ta0764 (224 aa).

It belongs to the UPF0173 family.

This Thermoplasma acidophilum (strain ATCC 25905 / DSM 1728 / JCM 9062 / NBRC 15155 / AMRC-C165) protein is UPF0173 metal-dependent hydrolase Ta0764.